The primary structure comprises 325 residues: NADH-quinone oxidoreductase subunit H (325 aa).

The next 9 helical transmembrane spans lie at 11–31 (ILLS…CGAF), 50–69 (NRVG…KMFF), 81–101 (VIFT…FAIV), 114–134 (IGIL…LFAG), 154–174 (LSYE…AGSF), 186–206 (IWNV…GVAV), 237–257 (FFVG…TLFF), 265–285 (LPPF…FILI), and 304–324 (VCLP…LWQA).

It belongs to the complex I subunit 1 family. As to quaternary structure, NDH-1 is composed of 13 different subunits. Subunits NuoA, H, J, K, L, M, N constitute the membrane sector of the complex.

The protein localises to the cell inner membrane. It carries out the reaction a quinone + NADH + 5 H(+)(in) = a quinol + NAD(+) + 4 H(+)(out). In terms of biological role, NDH-1 shuttles electrons from NADH, via FMN and iron-sulfur (Fe-S) centers, to quinones in the respiratory chain. The immediate electron acceptor for the enzyme in this species is believed to be ubiquinone. Couples the redox reaction to proton translocation (for every two electrons transferred, four hydrogen ions are translocated across the cytoplasmic membrane), and thus conserves the redox energy in a proton gradient. This subunit may bind ubiquinone. This chain is NADH-quinone oxidoreductase subunit H, found in Citrobacter koseri (strain ATCC BAA-895 / CDC 4225-83 / SGSC4696).